Here is a 119-residue protein sequence, read N- to C-terminus: MRIYETMFIIKPDIAEEEREKIANGVVEFLKEKLNAQIDNVDRWGIRKTAYPLKKYNEADYTVVYFRATGENLNELEMYFKVRPEFLRWQTFRRIDLEKKERKTAKKVETVENTEKVEE.

Belongs to the bacterial ribosomal protein bS6 family.

In terms of biological role, binds together with bS18 to 16S ribosomal RNA. The chain is Small ribosomal subunit protein bS6 from Thermosipho africanus (strain TCF52B).